A 339-amino-acid polypeptide reads, in one-letter code: Malate dehydrogenase 3, cytoplasmic (339 aa).

NAD(+)-binding positions include 22-23 (NI), Asp-49, and Gly-96. Arg-105 serves as a coordination point for oxaloacetate. Positions 119 and 138 each coordinate NAD(+). Oxaloacetate contacts are provided by Asn-138, Arg-169, His-194, and Ser-249. His-194 acts as the Proton acceptor in catalysis.

The protein belongs to the LDH/MDH superfamily. MDH type 2 family. Expressed in rosette leaves at low levels.

It localises to the cytoplasm. It catalyses the reaction (S)-malate + NAD(+) = oxaloacetate + NADH + H(+). Catalyzes a reversible NAD-dependent dehydrogenase reaction involved in central metabolism and redox homeostasis between organelle compartments. The polypeptide is Malate dehydrogenase 3, cytoplasmic (Arabidopsis thaliana (Mouse-ear cress)).